The chain runs to 647 residues: Centrosomal protein of 72 kDa (647 aa).

LRR repeat units follow at residues 29–50 (ELQS…GHSL), 55–76 (GLKS…QYLT), and 77–98 (ALES…FRLH). In terms of domain architecture, LRRCT spans 111–150 (NPVVKVEPDYRLFVVHLLPKLQQLDDRPVRASERKASRLH). 2 stretches are compositionally biased toward basic and acidic residues: residues 152 to 161 (ASEDSLDSKE) and 220 to 234 (KGRE…ESRH). Disordered stretches follow at residues 152–176 (ASED…HHPR), 211–256 (PPGS…RETR), and 285–413 (PEAS…ALPG). Phosphoserine is present on Ser-237. Over residues 366-377 (SLSRQDSSESRN) the composition is skewed to basic and acidic residues. Ser-382 bears the Phosphoserine mark. A compositionally biased stretch (basic and acidic residues) spans 390–402 (EEQRSRGVTDTRE). Residue Ser-404 is modified to Phosphoserine. The stretch at 476–620 (SLALESKSLQ…AQHRAEVEQM (145 aa)) forms a coiled coil.

It belongs to the CEP72 family. Interacts with KIZ, PCM1 and CDK5RAP2.

It is found in the cytoplasm. The protein localises to the cytoskeleton. It localises to the microtubule organizing center. The protein resides in the centrosome. Its subcellular location is the centriolar satellite. Its function is as follows. Involved in the recruitment of key centrosomal proteins to the centrosome. Provides centrosomal microtubule-nucleation activity on the gamma-tubulin ring complexes (gamma-TuRCs) and has critical roles in forming a focused bipolar spindle, which is needed for proper tension generation between sister chromatids. Required for localization of KIZ, AKAP9 and gamma-tubulin ring complexes (gamma-TuRCs). Involved in centriole duplication. Required for CDK5RAP22, CEP152, WDR62 and CEP63 centrosomal localization and promotes the centrosomal localization of CDK2. This Homo sapiens (Human) protein is Centrosomal protein of 72 kDa (CEP72).